Here is a 544-residue protein sequence, read N- to C-terminus: 4-coumarate--CoA ligase 2 (544 aa).

ATP is bound by residues serine 190, serine 191, glycine 192, threonine 193, threonine 194, and lysine 198. Tyrosine 240 serves as a coordination point for (E)-4-coumaroyl-AMP. Residue lysine 261 participates in CoA binding. An SBD1 region spans residues 263 to 332 (DIVPFLELIQ…AKFPNAKLGQ (70 aa)). The (E)-4-coumaroyl-AMP site is built by alanine 310, glutamine 332, glycine 333, threonine 337, and methionine 345. Residues glutamine 332, glycine 333, and threonine 337 each coordinate ATP. The segment at 333–400 (GYGMTEAGPV…IRGDQIMKGY (68 aa)) is SBD2. ATP contacts are provided by aspartate 421 and arginine 436. Residues lysine 438 and lysine 442 each coordinate (E)-4-coumaroyl-AMP. Positions 444 and 445 each coordinate CoA. Lysine 527 is a binding site for ATP.

It belongs to the ATP-dependent AMP-binding enzyme family. Requires Mg(2+) as cofactor.

The catalysed reaction is (E)-4-coumarate + ATP + CoA = (E)-4-coumaroyl-CoA + AMP + diphosphate. It catalyses the reaction (E)-4-coumarate + ATP + H(+) = (E)-4-coumaroyl-AMP + diphosphate. It carries out the reaction (E)-4-coumaroyl-AMP + CoA = (E)-4-coumaroyl-CoA + AMP + H(+). It functions in the pathway phytoalexin biosynthesis; 3,4',5-trihydroxystilbene biosynthesis; 3,4',5-trihydroxystilbene from trans-4-coumarate: step 1/2. Its function is as follows. Carboxylate--CoA ligase that may use 4-coumarate as substrate. Follows a two-step reaction mechanism, wherein the carboxylate substrate first undergoes adenylation by ATP, followed by a thioesterification in the presence of CoA to yield the final CoA thioester. The sequence is that of 4-coumarate--CoA ligase 2 (4CL2) from Petroselinum crispum (Parsley).